We begin with the raw amino-acid sequence, 431 residues long: Levansucrase Lscbeta (431 aa).

Sucrose is bound by residues tryptophan 61, aspartate 62, alanine 148, arginine 218, and aspartate 219. Aspartate 62 serves as the catalytic Nucleophile. Residue glutamate 303 is the Proton donor/acceptor of the active site.

This sequence belongs to the glycosyl hydrolase 68 family. As to quaternary structure, homodimer.

It catalyses the reaction [6)-beta-D-fructofuranosyl-(2-&gt;](n) alpha-D-glucopyranoside + sucrose = [6)-beta-D-fructofuranosyl-(2-&gt;](n+1) alpha-D-glucopyranoside + D-glucose. Sucrose hydrolase activity is negatively affected by salt concentration. The levan polymerization rate is constant regardless of sucrose concentration. In terms of biological role, catalyzes the synthesis of levan, a fructose polymer, by transferring the fructosyl moiety from sucrose to a growing acceptor molecule. Also displays sucrose hydrolase activity. The polypeptide is Levansucrase Lscbeta (Pseudomonas syringae pv. actinidiae).